A 201-amino-acid chain; its full sequence is Probable molybdenum cofactor guanylyltransferase (201 aa).

GTP is bound by residues leucine 16 to glycine 18, lysine 28, aspartate 75, and aspartate 107. Mg(2+) is bound at residue aspartate 107.

Belongs to the MobA family. The cofactor is Mg(2+).

It localises to the cytoplasm. It catalyses the reaction Mo-molybdopterin + GTP + H(+) = Mo-molybdopterin guanine dinucleotide + diphosphate. In terms of biological role, transfers a GMP moiety from GTP to Mo-molybdopterin (Mo-MPT) cofactor (Moco or molybdenum cofactor) to form Mo-molybdopterin guanine dinucleotide (Mo-MGD) cofactor. The chain is Probable molybdenum cofactor guanylyltransferase from Mycobacterium marinum (strain ATCC BAA-535 / M).